The sequence spans 1297 residues: Phosphoribosylformylglycinamidine synthase (1297 aa).

The segment at 304–323 is disordered; it reads PFPGAATGSGGEIRDEGATG. ATP contacts are provided by residues 307–318 and alanine 678; that span reads GAATGSGGEIRD. The Mg(2+) site is built by aspartate 679, glutamate 718, asparagine 722, and aspartate 886. Position 888 (serine 888) interacts with ATP. The Glutamine amidotransferase type-1 domain maps to 1043-1297; sequence RIAILREQGV…LFQNARVALG (255 aa). The active-site Nucleophile is cysteine 1137. Active-site residues include histidine 1262 and glutamate 1264.

In the N-terminal section; belongs to the FGAMS family. In terms of assembly, monomer.

The protein resides in the cytoplasm. It carries out the reaction N(2)-formyl-N(1)-(5-phospho-beta-D-ribosyl)glycinamide + L-glutamine + ATP + H2O = 2-formamido-N(1)-(5-O-phospho-beta-D-ribosyl)acetamidine + L-glutamate + ADP + phosphate + H(+). It functions in the pathway purine metabolism; IMP biosynthesis via de novo pathway; 5-amino-1-(5-phospho-D-ribosyl)imidazole from N(2)-formyl-N(1)-(5-phospho-D-ribosyl)glycinamide: step 1/2. In terms of biological role, phosphoribosylformylglycinamidine synthase involved in the purines biosynthetic pathway. Catalyzes the ATP-dependent conversion of formylglycinamide ribonucleotide (FGAR) and glutamine to yield formylglycinamidine ribonucleotide (FGAM) and glutamate. The sequence is that of Phosphoribosylformylglycinamidine synthase from Histophilus somni (strain 129Pt) (Haemophilus somnus).